Reading from the N-terminus, the 1434-residue chain is MDQELMDFFDFSKEFVRKQAPRGHVSSNVHAFVTESDELEKPIKREIVGKDYVKSFVEKEKKRMNGIFSSDEMASRRNKSLDDMDSDEEYEASPEIRTDAEFYEKYYFNLNRDKSLPIYAKREEIINAINENPVVIVKGETGCGKTTQVPPILFWMMVSKAKQYCNIVVTQPRRIAAISIANRVCQERQWQPGTVCGYQVGLHRQLERFADTRLLYCTTGVLLNILVNNKTLTHYTHIVLDEVHERGQEMDFLLIVIRRLLATNSRHVKVILMSATINPRELSDYFANESSAPPVIAASYGRNFTVEKYYRDQLQSINWEGHQEDINSPGITQEGYRSAIKTILVIDNMERNERGTGKSYNQSLREGSILIFLPGVGEINNMSDMLKDMANHDPIMKFNMVRCHSLMTSEDQREIFQPSPPGYRKIIMATNVAESSITVPDVSYIIDFCLEKVLVTDTSTNFSSLRLAWASKTNCRQRAGRVGRLRNGRVYRMVTKSFYQRELSEYSVPEMLRSPLQNCVLKAKELKMGTPVEMLALALSPPNLSDICNTILMLKEVGALFPTMDGTYDPRDGDITYWGTIMSKLPLDTHLSRLIILGYVFNLVDEAIIIAAGLTVRGIYIDSARLGADNYWMHYVFADGSGSDLVGIWRVYLTYLNMCENGLQKDASIQWAKRFHLSLRALSEMHLLVQDLRLRCEKLSLLPLNFPTHRISDDREKAIMLKVIIAGSFYPNYFVQSKSTSGDDRNMFSVISGLDPCRTVYFTSFTDRTMGELYTRKVKQLFPEAQIPPENMDVTFGQGSEKIFVTFKNDIYKPEGTTYVHVPGRIKAEVYKALRLRTYCNQHSLRVMEPMNALKYVKDKKIGKIVEGRWIPPSKPVAVELLALPSLFDKIIIGRITNIVSCGKFFFQPESFENCIANMSEHFNNPQQLQNCVRNAGAITKGLMLLAKRQGKYQRATVVRVDTQDSRNVRFYVRFVDYGDIERLPMAQLRLMSQDLLRHYRDLPPRLFECRLALVQPASMVSTYNAWPQKADDMLHALAKGGRVQLEIYSLVQNVAAVMIHLREGNLNELLVKEKLARRTDEDYMSRVDHDFRMRKQECRGYVSQQERQQVNEEYLRSKQLPQDMDLSPPPPEECNSLITLKGPFSTLESRVFSTMRSGMSKTVRIDPCSVNFVLLDTEPQDQHAKMVVAASISAAGRHNDVLTLRSTSIMPNIPGFAAIMTLIFCPRAQLKANTANSRYVSILAGIGYHPQTMQSYYEDHDLVINLDVNIDEHDVLLINQIRYMIDSAFFNLEGELHPTAGHADRVLIHNTIYPALNRLLSKNRNFIECNPNSSDYVWQDMEESGEPDPQPYGRRSIFPMHTIPELHEEKMDTVLDLIANCKEMYDYRNFEGSFDPMTCSLCKQYLESVAELRLHLLTQLHLDREKEVGYPID.

In terms of domain architecture, Helicase ATP-binding spans 126–295 (INAINENPVV…FANESSAPPV (170 aa)). An ATP-binding site is contributed by 139–146 (GETGCGKT). Positions 241-244 (DEVH) match the DEAH box motif. Positions 356 to 527 (TGKSYNQSLR…NCVLKAKELK (172 aa)) constitute a Helicase C-terminal domain. The Tudor domain occupies 936 to 999 (AGAITKGLML…RLMSQDLLRH (64 aa)).

Belongs to the DEAD box helicase family. DEAH subfamily.

The protein localises to the cytoplasm. It carries out the reaction ATP + H2O = ADP + phosphate + H(+). Probable ATP-binding RNA helicase which plays a central role during spermatogenesis and oogenesis by repressing transposable elements and preventing their mobilization, which is essential for the germline integrity. Acts via the piRNA metabolic process, which mediates the repression of transposable elements during meiosis by forming complexes composed of piRNAs and Piwi and govern the methylation and subsequent repression of transposons. Involved in the repression of LTR retrotransposon copia. Also involved in telomere regulation by repressing specialized telomeric retroelements HeT-A, TAHRE, and TART; Drosophila telomeres being maintained by transposition of specialized telomeric retroelements. Involved in telomeric trans-silencing, a repression mechanism by which a transposon or a transgene inserted in subtelomeric heterochromatin has the capacity to repress in trans in the female germline, a homologous transposon, or transgene located in euchromatin. Involved in the repression of testis-expressed Stellate genes by the homologous Su(Ste) repeats. Required for anteroposterior and dorsoventral axis formation during oogenesis. The chain is Probable ATP-dependent RNA helicase spindle-E (spn-E) from Drosophila persimilis (Fruit fly).